A 121-amino-acid chain; its full sequence is MSITNEQILDAIAEMSVMQVVELISAMEEKFGVSAAAAVVSGPAAAAAVEEQTEFNVILAAAGANKVAVIKAVRGATGLGLKEAKALVDGAPASVKEAVSKEEAEALKKELEEAGATVEVK.

Belongs to the bacterial ribosomal protein bL12 family. Homodimer. Part of the ribosomal stalk of the 50S ribosomal subunit. Forms a multimeric L10(L12)X complex, where L10 forms an elongated spine to which 2 to 4 L12 dimers bind in a sequential fashion. Binds GTP-bound translation factors.

In terms of biological role, forms part of the ribosomal stalk which helps the ribosome interact with GTP-bound translation factors. Is thus essential for accurate translation. This Vibrio cholerae serotype O1 (strain ATCC 39541 / Classical Ogawa 395 / O395) protein is Large ribosomal subunit protein bL12.